The sequence spans 427 residues: MDPSVTLWQFLLQLLREQGNGHIISWTSRDGGEFKLVDAEEVARLWGLRKNKTNMNYDKLSRALRYYYDKNIIRKVSGQKFVYKFVSYPEVAGCSTEDCPPQPEVSVTSAVAMAPATVHSGPGDNATGKPGTPKGAGMTGQGGLARSSRNEYMRSGLYSTFTIQSLQPQPPLHPRPASVLPNTTPAGVPAPPSGSRSTSPNPLEACLEAEEAGLPLQVILTPPEAPNQKSEELSLNPGFGRPQPPEVKVEGPKEELEVTEVGGFSPEAVKAEQEVSPSEGLLARLPAILTENTAQVCGLSTSTTEITQPQKGRKPRDLELPLSPSLLGGQGPERTPGSGTSSGLQAQGPALTPSLLPTHTLTPVLLTPSSLPPSIHFWSTLSPIAPRSPAKLSFQFPSSGSAQVHIPSISVDGLSTPVVLSPGPQKP.

A DNA-binding region (ETS) is located at residues 5-86; the sequence is VTLWQFLLQL…SGQKFVYKFV (82 aa). Disordered stretches follow at residues 116-146, 166-202, and 226-252; these read ATVH…GLAR, LQPQ…SPNP, and PNQK…VEGP. Glycyl lysine isopeptide (Lys-Gly) (interchain with G-Cter in SUMO) cross-links involve residues Lys-229, Lys-248, and Lys-253. A compositionally biased stretch (polar residues) spans 300 to 310; that stretch reads STSTTEITQPQ. Residues 300 to 350 form a disordered region; sequence STSTTEITQPQKGRKPRDLELPLSPSLLGGQGPERTPGSGTSSGLQAQGPA. The residue at position 323 (Ser-323) is a Phosphoserine; by MAPK1. Phosphothreonine; by MAPK1 occurs at positions 335, 352, 362, and 367. A sufficient for interaction with MAD2L2 region spans residues 348–398; it reads GPALTPSLLPTHTLTPVLLTPSSLPPSIHFWSTLSPIAPRSPAKLSFQFPS. The O-linked (GlcNAc) threonine glycan is linked to Thr-380. At Ser-382 the chain carries Phosphoserine; by MAPK1 and MAPK8. Ser-388 carries the phosphoserine; by MAPK1 modification. Thr-416 is subject to Phosphothreonine; by MAPK1. Residue Ser-421 is modified to Phosphoserine; by MAPK1.

The protein belongs to the ETS family. As to quaternary structure, interacts in its sumoylated form with PIAS2/PIASX which enhances its transcriptional activator activity. Interacts with MAD2L2; the interaction is direct and promotes phosphorylation by the kinases MAPK8 and/or MAPK9. Interacts with POU1F1. In terms of processing, sumoylation represses transcriptional activator activity as it results in recruitment of HDAC2 to target gene promoters which leads to decreased histone acetylation and reduced transactivator activity. It also regulates nuclear retention. On mitogenic stimulation, phosphorylated on C-terminal serine and threonine residues by MAPK1. Ser-382 and Ser-388 are the preferred sites for MAPK1. In vitro, phosphorylation by MAPK1 potentiates ternary complex formation with the serum responses factors, SRE and SRF. Also phosphorylated on Ser-382 by MAPK8 and/or MAKP9. Phosphorylation leads to loss of sumoylation and restores transcriptional activator activity. Phosphorylated and activated by CAMK4, MAPK11, MAPK12 and MAPK14. Upon bFGF stimulus, phosphorylated by PAK1. Phosphorylated by PRP4K at Thr-416; phosphorylation activation ELK1 transcriptional activity.

It is found in the nucleus. Transcription factor that binds to purine-rich DNA sequences. Forms a ternary complex with SRF and the ETS and SRF motifs of the serum response element (SRE) on the promoter region of immediate early genes such as FOS and IER2. Induces target gene transcription upon JNK and MAPK-signaling pathways stimulation. The polypeptide is ETS domain-containing protein Elk-1 (Rattus norvegicus (Rat)).